We begin with the raw amino-acid sequence, 344 residues long: Nicotinate-nucleotide--dimethylbenzimidazole phosphoribosyltransferase (344 aa).

Glu-310 functions as the Proton acceptor in the catalytic mechanism.

The protein belongs to the CobT family.

The catalysed reaction is 5,6-dimethylbenzimidazole + nicotinate beta-D-ribonucleotide = alpha-ribazole 5'-phosphate + nicotinate + H(+). It participates in nucleoside biosynthesis; alpha-ribazole biosynthesis; alpha-ribazole from 5,6-dimethylbenzimidazole: step 1/2. Catalyzes the synthesis of alpha-ribazole-5'-phosphate from nicotinate mononucleotide (NAMN) and 5,6-dimethylbenzimidazole (DMB). The chain is Nicotinate-nucleotide--dimethylbenzimidazole phosphoribosyltransferase from Chromobacterium violaceum (strain ATCC 12472 / DSM 30191 / JCM 1249 / CCUG 213 / NBRC 12614 / NCIMB 9131 / NCTC 9757 / MK).